A 433-amino-acid polypeptide reads, in one-letter code: Glutamate--tRNA ligase (433 aa).

The short motif at 10-20 is the 'HIGH' region element; the sequence is PSPTGYLHIGG. The 'KMSKS' region signature appears at 211 to 215; the sequence is KMSKR. Lys-214 contributes to the ATP binding site.

This sequence belongs to the class-I aminoacyl-tRNA synthetase family. Glutamate--tRNA ligase type 1 subfamily. As to quaternary structure, monomer.

The protein localises to the cytoplasm. The catalysed reaction is tRNA(Glu) + L-glutamate + ATP = L-glutamyl-tRNA(Glu) + AMP + diphosphate. In terms of biological role, catalyzes the attachment of glutamate to tRNA(Glu) in a two-step reaction: glutamate is first activated by ATP to form Glu-AMP and then transferred to the acceptor end of tRNA(Glu). The sequence is that of Glutamate--tRNA ligase from Akkermansia muciniphila (strain ATCC BAA-835 / DSM 22959 / JCM 33894 / BCRC 81048 / CCUG 64013 / CIP 107961 / Muc).